The sequence spans 127 residues: Large ribosomal subunit protein bL12 (127 aa).

Belongs to the bacterial ribosomal protein bL12 family. Homodimer. Part of the ribosomal stalk of the 50S ribosomal subunit. Forms a multimeric L10(L12)X complex, where L10 forms an elongated spine to which 2 to 4 L12 dimers bind in a sequential fashion. Binds GTP-bound translation factors.

Forms part of the ribosomal stalk which helps the ribosome interact with GTP-bound translation factors. Is thus essential for accurate translation. This chain is Large ribosomal subunit protein bL12, found in Pelobacter propionicus (strain DSM 2379 / NBRC 103807 / OttBd1).